Reading from the N-terminus, the 315-residue chain is Homoserine kinase (315 aa).

97 to 107 (PPARGLGSSAT) is an ATP binding site.

The protein belongs to the GHMP kinase family. Homoserine kinase subfamily.

The protein resides in the cytoplasm. The catalysed reaction is L-homoserine + ATP = O-phospho-L-homoserine + ADP + H(+). It functions in the pathway amino-acid biosynthesis; L-threonine biosynthesis; L-threonine from L-aspartate: step 4/5. Its function is as follows. Catalyzes the ATP-dependent phosphorylation of L-homoserine to L-homoserine phosphate. This chain is Homoserine kinase, found in Prochlorococcus marinus (strain NATL2A).